The following is a 317-amino-acid chain: UAP56-interacting factor (317 aa).

Methionine 1 is subject to N-acetylmethionine. The tract at residues 1–23 (MNRFGTRLVGATATTPPAPKARS) is disordered. A Phosphothreonine modification is found at threonine 14. At serine 23 the chain carries Phosphoserine. The short motif at 26–44 (NLDKIDMSLDEIIKLNRKE) is the UAP56-binding motif element. Serine 60 and serine 117 each carry phosphoserine. Lysine 139 is covalently cross-linked (Glycyl lysine isopeptide (Lys-Gly) (interchain with G-Cter in SUMO1)). Residue lysine 260 forms a Glycyl lysine isopeptide (Lys-Gly) (interchain with G-Cter in SUMO2) linkage.

It belongs to the UIF family. In terms of assembly, interacts with DDX39B/UAP56 and NXF1; interaction with DDX39B/UAP56 and NXF1 are mutually exclusive. Interacts with SSRP1; required for its recruitment to mRNAs. Interacts with CHTOP.

It is found in the nucleus. The protein resides in the nucleoplasm. Its subcellular location is the nucleus speckle. Its function is as follows. Required for mRNA export from the nucleus to the cytoplasm. Acts as an adapter that uses the DDX39B/UAP56-NFX1 pathway to ensure efficient mRNA export and delivering to the nuclear pore. Associates with spliced and unspliced mRNAs simultaneously with ALYREF/THOC4. The sequence is that of UAP56-interacting factor (Fyttd1) from Rattus norvegicus (Rat).